The following is a 368-amino-acid chain: Glutaminyl-peptide cyclotransferase (368 aa).

The N-terminal stretch at 1–23 (MARERRDSKAATFFCLAWALCLA) is a signal peptide. N-linked (GlcNAc...) asparagine glycosylation is found at N53 and N65. A disulfide bridge connects residues C143 and C169. Zn(2+) is bound at residue D164. Catalysis depends on E207, which acts as the Proton acceptor. Position 208 (E208) interacts with Zn(2+). The Proton acceptor role is filled by D254. N292 is a glycosylation site (N-linked (GlcNAc...) asparagine). Residue H336 coordinates Zn(2+). N-linked (GlcNAc...) asparagine glycosylation occurs at N352.

The protein belongs to the glutaminyl-peptide cyclotransferase family. In terms of tissue distribution, expressed by the venom gland.

It localises to the secreted. It carries out the reaction N-terminal L-glutaminyl-[peptide] = N-terminal 5-oxo-L-prolyl-[peptide] + NH4(+). Its function is as follows. Responsible for the biosynthesis of pyroglutamyl peptides. Has a bias against acidic and tryptophan residues adjacent to the N-terminal glutaminyl residue and a lack of importance of chain length after the second residue. Also catalyzes N-terminal pyroglutamate formation. The protein is Glutaminyl-peptide cyclotransferase (QPCT) of Bothrops jararaca (Jararaca).